The following is a 401-amino-acid chain: Mu-type opioid receptor (401 aa).

The Extracellular portion of the chain corresponds to 1-69 (MDSSADPRNA…CPPTGSPSMV (69 aa)). N9, N12, N34, N41, and N49 each carry an N-linked (GlcNAc...) asparagine glycan. A helical membrane pass occupies residues 70–94 (TAITIMALYSIVCVVGLFGNFLVMY). Topologically, residues 95-107 (VIVRYTKMKTATN) are cytoplasmic. Residues 108–132 (IYIFNLALADALATSTLPFQSVNYL) traverse the membrane as a helical segment. Residues 133-143 (MGTWPFGTILC) lie on the Extracellular side of the membrane. C143 and C220 are disulfide-bonded. The helical transmembrane segment at 144–166 (KIVISIDYYNMFTSIFTLCTMSV) threads the bilayer. The Cytoplasmic segment spans residues 167-186 (DRYIAVCHPVKALDFRTPRN). Position 169 is a phosphotyrosine (Y169). Residues 187–208 (AKIINVCNWILSSAIGLPVMFM) traverse the membrane as a helical segment. Topologically, residues 209–231 (ATTKYRNGSIDCALTFSHPTWYW) are extracellular. A helical transmembrane segment spans residues 232-256 (ENLLKICVFIFAFIMPVLIITVCYG). Residues 257 to 280 (LMILRLKSVRMLSGSKEKDRNLRR) lie on the Cytoplasmic side of the membrane. A helical transmembrane segment spans residues 281-307 (ITRMVLVVVAVFIVCWTPIHIYVIIKA). Topologically, residues 308–315 (LITIPETT) are extracellular. A helical transmembrane segment spans residues 316–339 (FQTVSWHFCIALGYTNSCLNPVLY). The short motif at 335-339 (NPVLY) is the NPxxY; plays a role in stabilizing the activated conformation of the receptor element. Topologically, residues 340 to 401 (AFLDENFKRC…NLEAETAPLP (62 aa)) are cytoplasmic. C354 carries S-palmitoyl cysteine lipidation. Positions 365 to 385 (NSARIRQNTRDHPSTANTVDR) are disordered. Phosphoserine is present on S366. Residue T373 is modified to Phosphothreonine. A Phosphoserine modification is found at S378. A Phosphothreonine modification is found at T397.

This sequence belongs to the G-protein coupled receptor 1 family. In terms of assembly, forms homooligomers and heterooligomers with other GPCRs, such as OPRD1, OPRK1, OPRL1, NPFFR2, ADRA2A, SSTR2, CNR1 and CCR5 (probably in dimeric forms). Interacts with heterotrimeric G proteins; interaction with a heterotrimeric complex containing GNAI1, GNB1 and GNG2 stabilizes the active conformation of the receptor and increases its affinity for endomorphin-2, the synthetic opioid peptide DAMGO and for morphinan agonists. Interacts with PPL; the interaction disrupts agonist-mediated G-protein activation. Interacts (via C-terminus) with DNAJB4 (via C-terminus). Interacts with calmodulin; the interaction inhibits the constitutive activity of OPRM1; it abolishes basal and attenuates agonist-stimulated G-protein coupling. Interacts with FLNA, PLD2, RANBP9 and WLS and GPM6A. Interacts with RTP4. Interacts with SYP and GNAS. Interacts with RGS9, RGS17, RGS20, RGS4, PPP1R9B and HINT1. In terms of processing, phosphorylated. Differentially phosphorylated in basal and agonist-induced conditions. Agonist-mediated phosphorylation modulates receptor internalization. Phosphorylated by GRK2 in a agonist-dependent manner. Phosphorylation at Tyr-169 requires receptor activation, is dependent on non-receptor protein tyrosine kinase Src and results in a decrease in agonist efficacy by reducing G-protein coupling efficiency. Phosphorylated on tyrosine residues; the phosphorylation is involved in agonist-induced G-protein-independent receptor down-regulation. Phosphorylation at Ser-378 is involved in G-protein-dependent but not beta-arrestin-dependent activation of the ERK pathway. Ubiquitinated. A basal ubiquitination seems not to be related to degradation. Ubiquitination is increased upon formation of OPRM1:OPRD1 oligomers leading to proteasomal degradation; the ubiquitination is diminished by RTP4.

It is found in the cell membrane. Its subcellular location is the cell projection. It localises to the axon. The protein resides in the perikaryon. The protein localises to the dendrite. It is found in the endosome. Its function is as follows. Receptor for endogenous opioids such as beta-endorphin and endomorphin. Receptor for natural and synthetic opioids including morphine, heroin, DAMGO, fentanyl, etorphine, buprenorphin and methadone. Also activated by enkephalin peptides, such as Met-enkephalin or Met-enkephalin-Arg-Phe, with higher affinity for Met-enkephalin-Arg-Phe. Agonist binding to the receptor induces coupling to an inactive GDP-bound heterotrimeric G-protein complex and subsequent exchange of GDP for GTP in the G-protein alpha subunit leading to dissociation of the G-protein complex with the free GTP-bound G-protein alpha and the G-protein beta-gamma dimer activating downstream cellular effectors. The agonist- and cell type-specific activity is predominantly coupled to pertussis toxin-sensitive G(i) and G(o) G alpha proteins, GNAI1, GNAI2, GNAI3 and GNAO1, and to a lesser extent to pertussis toxin-insensitive G alpha proteins GNAZ and GNA15. They mediate an array of downstream cellular responses, including inhibition of adenylate cyclase activity and both N-type and L-type calcium channels, activation of inward rectifying potassium channels, mitogen-activated protein kinase (MAPK), phospholipase C (PLC), phosphoinositide/protein kinase (PKC), phosphoinositide 3-kinase (PI3K) and regulation of NF-kappa-B. Also couples to adenylate cyclase stimulatory G alpha proteins. The selective temporal coupling to G-proteins and subsequent signaling can be regulated by RGSZ proteins, such as RGS9, RGS17 and RGS4. Phosphorylation by members of the GPRK subfamily of Ser/Thr protein kinases and association with beta-arrestins is involved in short-term receptor desensitization. Beta-arrestins associate with the GPRK-phosphorylated receptor and uncouple it from the G-protein thus terminating signal transduction. The phosphorylated receptor is internalized through endocytosis via clathrin-coated pits which involves beta-arrestins. The activation of the ERK pathway occurs either in a G-protein-dependent or a beta-arrestin-dependent manner and is regulated by agonist-specific receptor phosphorylation. Acts as a class A G-protein coupled receptor (GPCR) which dissociates from beta-arrestin at or near the plasma membrane and undergoes rapid recycling. Receptor down-regulation pathways are varying with the agonist and occur dependent or independent of G-protein coupling. Endogenous ligands induce rapid desensitization, endocytosis and recycling. Heterooligomerization with other GPCRs can modulate agonist binding, signaling and trafficking properties. Involved in neurogenesis. The polypeptide is Mu-type opioid receptor (OPRM1) (Sus scrofa (Pig)).